Consider the following 141-residue polypeptide: ATP synthase epsilon chain (141 aa).

It belongs to the ATPase epsilon chain family. In terms of assembly, F-type ATPases have 2 components, CF(1) - the catalytic core - and CF(0) - the membrane proton channel. CF(1) has five subunits: alpha(3), beta(3), gamma(1), delta(1), epsilon(1). CF(0) has three main subunits: a, b and c.

The protein resides in the cell inner membrane. Produces ATP from ADP in the presence of a proton gradient across the membrane. In Pseudomonas aeruginosa (strain LESB58), this protein is ATP synthase epsilon chain.